Consider the following 99-residue polypeptide: Large ribosomal subunit protein uL23 (99 aa).

It belongs to the universal ribosomal protein uL23 family. Part of the 50S ribosomal subunit. Contacts protein L29, and trigger factor when it is bound to the ribosome.

One of the early assembly proteins it binds 23S rRNA. One of the proteins that surrounds the polypeptide exit tunnel on the outside of the ribosome. Forms the main docking site for trigger factor binding to the ribosome. The sequence is that of Large ribosomal subunit protein uL23 from Francisella philomiragia subsp. philomiragia (strain ATCC 25017 / CCUG 19701 / FSC 153 / O#319-036).